The sequence spans 261 residues: Pyridoxine-5'-phosphate oxidase (261 aa).

42–45 (RGDR) provides a ligand contact to pyridoxal 5'-phosphate. Residue 95–98 (RMLL) coordinates FMN. Lysine 100 provides a ligand contact to pyridoxal 5'-phosphate. FMN contacts are provided by residues 110–111 (FT), 116–117 (RK), and glutamine 139. The pyridoxal 5'-phosphate site is built by tyrosine 157, arginine 161, and serine 165. FMN contacts are provided by residues 174–175 (QS) and tryptophan 219. 225 to 227 (RLH) is a pyridoxal 5'-phosphate binding site. Arginine 229 lines the FMN pocket. Phosphothreonine is present on threonine 238. Serine 241 bears the Phosphoserine mark.

Belongs to the pyridoxamine 5'-phosphate oxidase family. In terms of assembly, homodimer. FMN is required as a cofactor. In terms of tissue distribution, ubiquitous. Expressed in liver, brain, lung, prostate and stomach (at protein level).

The enzyme catalyses pyridoxine 5'-phosphate + O2 = pyridoxal 5'-phosphate + H2O2. It catalyses the reaction pyridoxamine 5'-phosphate + O2 + H2O = pyridoxal 5'-phosphate + H2O2 + NH4(+). Its pathway is cofactor metabolism; pyridoxal 5'-phosphate salvage; pyridoxal 5'-phosphate from pyridoxamine 5'-phosphate: step 1/1. It participates in cofactor metabolism; pyridoxal 5'-phosphate salvage; pyridoxal 5'-phosphate from pyridoxine 5'-phosphate: step 1/1. Its function is as follows. Catalyzes the oxidation of either pyridoxine 5'-phosphate (PNP) or pyridoxamine 5'-phosphate (PMP) into pyridoxal 5'-phosphate (PLP). In Homo sapiens (Human), this protein is Pyridoxine-5'-phosphate oxidase (PNPO).